A 278-amino-acid polypeptide reads, in one-letter code: Small ribosomal subunit protein uS2 (278 aa).

Positions 235–278 (QRRKDHGEGGQQAAGGGRGQRDEINVYQGGRGGRGGGPRQQQAS) are disordered. Composition is skewed to gly residues over residues 243-252 (GGQQAAGGGR) and 263-272 (GGRGGRGGGP).

It belongs to the universal ribosomal protein uS2 family.

The polypeptide is Small ribosomal subunit protein uS2 (Sorangium cellulosum (strain So ce56) (Polyangium cellulosum (strain So ce56))).